Consider the following 415-residue polypeptide: GPI mannosyltransferase 1 (415 aa).

The next 9 membrane-spanning stretches (helical) occupy residues 8–28 (PSLV…YGAW), 82–102 (FFSF…WLIA), 134–154 (TRGS…WAVL), 158–178 (ITLA…PFVY), 222–242 (LLLT…MYIL), 284–304 (FESL…PIVL), 329–349 (SQYF…SSLM), 354–374 (LGIT…QQGY), and 387–407 (GLFL…GIII).

Belongs to the PIGM family.

The protein resides in the endoplasmic reticulum membrane. It functions in the pathway glycolipid biosynthesis; glycosylphosphatidylinositol-anchor biosynthesis. Functionally, mannosyltransferase involved in glycosylphosphatidylinositol-anchor biosynthesis. Transfers the first alpha-1,4-mannose to GlcN-acyl-PI during GPI precursor assembly. Required for cell wall integrity. The polypeptide is GPI mannosyltransferase 1 (gpi14) (Aspergillus oryzae (strain ATCC 42149 / RIB 40) (Yellow koji mold)).